The following is a 360-amino-acid chain: Ferrochelatase (360 aa).

The Fe cation site is built by His210 and Glu291.

This sequence belongs to the ferrochelatase family.

It is found in the cytoplasm. It catalyses the reaction heme b + 2 H(+) = protoporphyrin IX + Fe(2+). It functions in the pathway porphyrin-containing compound metabolism; protoheme biosynthesis; protoheme from protoporphyrin-IX: step 1/1. Functionally, catalyzes the ferrous insertion into protoporphyrin IX. The chain is Ferrochelatase from Pseudoalteromonas atlantica (strain T6c / ATCC BAA-1087).